The following is a 426-amino-acid chain: Enolase (426 aa).

A (2R)-2-phosphoglycerate-binding site is contributed by Gln163. Glu205 (proton donor) is an active-site residue. Positions 242, 283, and 310 each coordinate Mg(2+). (2R)-2-phosphoglycerate is bound by residues Lys335, Arg364, Ser365, and Lys386. Lys335 (proton acceptor) is an active-site residue.

The protein belongs to the enolase family. Requires Mg(2+) as cofactor.

The protein localises to the cytoplasm. Its subcellular location is the secreted. It localises to the cell surface. The catalysed reaction is (2R)-2-phosphoglycerate = phosphoenolpyruvate + H2O. Its pathway is carbohydrate degradation; glycolysis; pyruvate from D-glyceraldehyde 3-phosphate: step 4/5. In terms of biological role, catalyzes the reversible conversion of 2-phosphoglycerate (2-PG) into phosphoenolpyruvate (PEP). It is essential for the degradation of carbohydrates via glycolysis. This chain is Enolase, found in Beutenbergia cavernae (strain ATCC BAA-8 / DSM 12333 / CCUG 43141 / JCM 11478 / NBRC 16432 / NCIMB 13614 / HKI 0122).